The following is a 320-amino-acid chain: Nucleotide-binding protein Psyc_0118 (320 aa).

32 to 39 (GRSGSGKT) lines the ATP pocket. 82–85 (DIRT) provides a ligand contact to GTP.

The protein belongs to the RapZ-like family.

Functionally, displays ATPase and GTPase activities. The sequence is that of Nucleotide-binding protein Psyc_0118 from Psychrobacter arcticus (strain DSM 17307 / VKM B-2377 / 273-4).